The primary structure comprises 379 residues: Succinyl-diaminopimelate desuccinylase (379 aa).

H70 contacts Zn(2+). The active site involves D72. A Zn(2+)-binding site is contributed by D103. E137 functions as the Proton acceptor in the catalytic mechanism. Residues E138, E166, and H352 each contribute to the Zn(2+) site.

It belongs to the peptidase M20A family. DapE subfamily. In terms of assembly, homodimer. It depends on Zn(2+) as a cofactor. Co(2+) serves as cofactor.

It catalyses the reaction N-succinyl-(2S,6S)-2,6-diaminopimelate + H2O = (2S,6S)-2,6-diaminopimelate + succinate. It participates in amino-acid biosynthesis; L-lysine biosynthesis via DAP pathway; LL-2,6-diaminopimelate from (S)-tetrahydrodipicolinate (succinylase route): step 3/3. Its function is as follows. Catalyzes the hydrolysis of N-succinyl-L,L-diaminopimelic acid (SDAP), forming succinate and LL-2,6-diaminopimelate (DAP), an intermediate involved in the bacterial biosynthesis of lysine and meso-diaminopimelic acid, an essential component of bacterial cell walls. The polypeptide is Succinyl-diaminopimelate desuccinylase (Shewanella putrefaciens (strain CN-32 / ATCC BAA-453)).